We begin with the raw amino-acid sequence, 1092 residues long: Probable cellulose synthase A catalytic subunit 5 [UDP-forming] (1092 aa).

The Cytoplasmic portion of the chain corresponds to 1–279; the sequence is MEASAGLVAG…SSSLVNPYRM (279 aa). Zn(2+) contacts are provided by cysteine 39, cysteine 42, cysteine 58, cysteine 61, cysteine 66, cysteine 69, cysteine 81, and cysteine 84. An RING-type; degenerate zinc finger spans residues 39 to 85; the sequence is CQICGDDVGLTPDGEPFVACNECAFPVCRDCYEYERREGTQNCPQCK. Residues 280–300 form a helical membrane-spanning segment; it reads IIIIRLVVLGFFFHYRVMHPV. Topologically, residues 301–302 are extracellular; the sequence is PD. Residues 303–323 traverse the membrane as a helical segment; sequence AFALWLISVICEIWFAMSWIL. The Cytoplasmic portion of the chain corresponds to 324-868; it reads DQFPKWFPIE…CLERFSYINS (545 aa). Serine 362, lysine 368, glutamate 369, and aspartate 398 together coordinate UDP-alpha-D-glucose. Aspartate 398 is an active-site residue. Residues 450 to 479 adopt a coiled-coil conformation; it reads NFVRERRAMKREYEEFKVRINALVAKAQKV. Position 539 (lysine 539) interacts with UDP-alpha-D-glucose. 2 residues coordinate Mn(2+): lysine 540 and aspartate 564. Residue aspartate 792 is part of the active site. A helical transmembrane segment spans residues 869–889; that stretch reads IVYPWTSIPLLAYCTLPAICL. At 890-901 the chain is on the extracellular side; that stretch reads LTGKFITPELTN. The helical transmembrane segment at 902–922 threads the bilayer; it reads IASLWFMSLFICIFATGILEM. Residues 923–938 lie on the Cytoplasmic side of the membrane; it reads RWSGVGIDDWWRNEQF. Residues 939 to 959 traverse the membrane as a helical segment; sequence WVIGGVSSHLFAVFQGLLKVI. Topologically, residues 960–987 are extracellular; that stretch reads AGIDTSFTVTSKGGDDEEFSELYTFKWT. Residues 988–1008 traverse the membrane as a helical segment; the sequence is TLLIPPTTLLLLNFIGVVAGV. Residues 1009 to 1019 lie on the Cytoplasmic side of the membrane; that stretch reads SNAINNGYESW. A helical membrane pass occupies residues 1020-1040; it reads GPLFGKLFFAFWVIVHLYPFL. The Extracellular segment spans residues 1041 to 1049; the sequence is KGLVGRQNR. Residues 1050 to 1070 form a helical membrane-spanning segment; the sequence is TPTIVIVWSILLASIFSLLWV. Residues 1071–1092 are Cytoplasmic-facing; the sequence is RIDPFLAKNDGPLLEECGLDCN.

Belongs to the glycosyltransferase 2 family. Plant cellulose synthase subfamily. It depends on Mn(2+) as a cofactor. Zn(2+) serves as cofactor.

It is found in the cell membrane. The enzyme catalyses [(1-&gt;4)-beta-D-glucosyl](n) + UDP-alpha-D-glucose = [(1-&gt;4)-beta-D-glucosyl](n+1) + UDP + H(+). It participates in glycan metabolism; plant cellulose biosynthesis. In terms of biological role, probable catalytic subunit of cellulose synthase terminal complexes ('rosettes'), required for beta-1,4-glucan microfibril crystallization, a major mechanism of the cell wall formation. This Oryza sativa subsp. indica (Rice) protein is Probable cellulose synthase A catalytic subunit 5 [UDP-forming] (CESA5).